Here is a 489-residue protein sequence, read N- to C-terminus: ATP synthase subunit beta 1 (489 aa).

159–166 is an ATP binding site; the sequence is GGAGVGKT. The span at 465–477 shows a compositional bias: basic and acidic residues; it reads EKSKKAAEDKPKA. The disordered stretch occupies residues 465-489; it reads EKSKKAAEDKPKAEEDEDATSLHDA.

The protein belongs to the ATPase alpha/beta chains family. As to quaternary structure, F-type ATPases have 2 components, CF(1) - the catalytic core - and CF(0) - the membrane proton channel. CF(1) has five subunits: alpha(3), beta(3), gamma(1), delta(1), epsilon(1). CF(0) has three main subunits: a(1), b(2) and c(9-12). The alpha and beta chains form an alternating ring which encloses part of the gamma chain. CF(1) is attached to CF(0) by a central stalk formed by the gamma and epsilon chains, while a peripheral stalk is formed by the delta and b chains.

It localises to the cell inner membrane. The catalysed reaction is ATP + H2O + 4 H(+)(in) = ADP + phosphate + 5 H(+)(out). Produces ATP from ADP in the presence of a proton gradient across the membrane. The catalytic sites are hosted primarily by the beta subunits. In Marinomonas sp. (strain MWYL1), this protein is ATP synthase subunit beta 1.